We begin with the raw amino-acid sequence, 189 residues long: MNCARLHQRIPLRAMALTTTSYPALAPSHSFANASTSVMTASAMAVAHRAAATTGASDATTTAQVVHYSKLGMDGFTDIKFNTAADELLELVETKVDALDSAAVEDVSCNGGVLTLETTERGTFILNKQAPNVQLWLSSPISGPHHYDMITVTQDGHEKVSWKSDHDGHDLVKKLEKELTEVLGTAFKL.

Residues 1–50 (MNCARLHQRIPLRAMALTTTSYPALAPSHSFANASTSVMTASAMAVAHRA) constitute a mitochondrion transit peptide.

This sequence belongs to the frataxin family. As to quaternary structure, interacts with IscU; the interaction is direct.

The protein resides in the mitochondrion. The enzyme catalyses 4 Fe(2+) + O2 + 4 H(+) = 4 Fe(3+) + 2 H2O. Iron-binding protein which binds 2 iron atoms per monomer. Probably, acts as an iron carrier for the biosynthesis of Fe-S clusters. Stimulates the cysteine desulphurase activity of IscS in the presence of IscU. This is Frataxin-like protein, mitochondrial from Leishmania donovani.